The sequence spans 122 residues: MIQPQTHLNVADNSGARELMCIRVIGASNRRYAHIGDVIVAVIKEAVPNTPLERSEVIRAVIVRTRKELKRDNGMIIRYDDNAAVVIDQEGNPKGTRIFGAIARELRQLNFTKIVSLAPEVL.

This sequence belongs to the universal ribosomal protein uL14 family. In terms of assembly, part of the 50S ribosomal subunit.

The protein resides in the plastid. The protein localises to the chloroplast. Functionally, binds to 23S rRNA. This Gossypium barbadense (Sea Island cotton) protein is Large ribosomal subunit protein uL14c.